A 498-amino-acid chain; its full sequence is MTGASPRPLMVLGTSSGAGKSLMTAALCRVLQRRGEQALPFKGQNMSNNAWVDADGGEMAYSQAMQAWAAGLEPCCSMNPVLLKPRGDSTSEVIHGGQSVGIARAEHYYRDWFRPGWKAIRTGLMQLQQQWPQGRLVLEGAGSPVEVNLQRRDLTNLRLAQYLRANCLLVADIERGGVFAQIVGTLSLLRPVESPLIKGILINRFRGRRELFDEGRRWLEANTGVPVLGVMPWLNELFPPEDSLDLLERKPTRGATDLEIAVLRLPSLSNFSDLDPLEAEASLRLRWIQPGEPLGEPDAVILPGSKQTLRDLEAMNSCGLADQLRAYAQAGGSVLGICGGMQMLGRSLSDPEGLEGTDQRCSQNGLGLLPLETTFSGTKRLSQRSIDGLWPMETPLSGFELHYGTTIPDAGLQPLSSDPGLGWWAPGPKGSSVVGTYLHGLLDNGPWRRAWLNRLREQRGLQPLANDPKNHSAHRDLLLDRLADAFEQHVNLAPLLQP.

Positions 257-447 (DLEIAVLRLP…LHGLLDNGPW (191 aa)) constitute a GATase cobBQ-type domain. Catalysis depends on C338, which acts as the Nucleophile. Residue H439 is part of the active site.

The protein belongs to the CobB/CobQ family. CobQ subfamily.

The protein operates within cofactor biosynthesis; adenosylcobalamin biosynthesis. Functionally, catalyzes amidations at positions B, D, E, and G on adenosylcobyrinic A,C-diamide. NH(2) groups are provided by glutamine, and one molecule of ATP is hydrogenolyzed for each amidation. This Synechococcus sp. (strain CC9605) protein is Cobyric acid synthase.